The following is a 137-amino-acid chain: Large ribosomal subunit protein eL28 (137 aa).

The residue at position 2 (Ser2) is an N-acetylserine. Glycyl lysine isopeptide (Lys-Gly) (interchain with G-Cter in SUMO2) cross-links involve residues Lys58 and Lys65. Ser115 is subject to Phosphoserine.

This sequence belongs to the eukaryotic ribosomal protein eL28 family. In terms of assembly, component of the large ribosomal subunit.

It is found in the cytoplasm. Component of the large ribosomal subunit. The ribosome is a large ribonucleoprotein complex responsible for the synthesis of proteins in the cell. In Mus musculus (Mouse), this protein is Large ribosomal subunit protein eL28 (Rpl28).